A 169-amino-acid polypeptide reads, in one-letter code: Der GTPase-activating protein YihI (169 aa).

Disordered regions lie at residues 1–98 (MKPS…PQAE) and 144–169 (GLSY…LRGN). Basic residues predominate over residues 10–19 (SKGHAKARRK). The segment covering 20-30 (TREELDQEARD) has biased composition (basic and acidic residues). The segment covering 31–40 (RKRLKKRRGH) has biased composition (basic residues). Residues 49–58 (GNTTSGSKGQ) are compositionally biased toward polar residues. The segment covering 147 to 159 (YDDDEEEEEDEKQ) has biased composition (acidic residues). The span at 160–169 (EDMMRLLRGN) shows a compositional bias: basic and acidic residues.

Belongs to the YihI family. As to quaternary structure, interacts with Der.

A GTPase-activating protein (GAP) that modifies Der/EngA GTPase function. May play a role in ribosome biogenesis. The chain is Der GTPase-activating protein YihI from Escherichia coli O6:K15:H31 (strain 536 / UPEC).